The primary structure comprises 190 residues: Biphenyl-2,3-diol 1,2-dioxygenase 3 (190 aa).

A VOC domain is found at 6–125; the sequence is RLAHFVLQTN…DGNMVELQID (120 aa). 3 residues coordinate Fe cation: H9, H73, and E121.

It belongs to the extradiol ring-cleavage dioxygenase family. Homohexamer. It depends on Fe(2+) as a cofactor.

The enzyme catalyses biphenyl-2,3-diol + O2 = 2-hydroxy-6-oxo-6-phenylhexa-2,4-dienoate + H(+). Its pathway is xenobiotic degradation; biphenyl degradation; 2-hydroxy-2,4-pentadienoate and benzoate from biphenyl: step 3/4. The sequence is that of Biphenyl-2,3-diol 1,2-dioxygenase 3 (bphC3) from Rhodococcus globerulus.